The chain runs to 130 residues: Small ribosomal subunit protein uS9 (130 aa).

The disordered stretch occupies residues 108–130 (PRMKERRKYGLKKARRAPQFSKR). Residues 111-130 (KERRKYGLKKARRAPQFSKR) show a composition bias toward basic residues.

This sequence belongs to the universal ribosomal protein uS9 family.

In Desulforamulus reducens (strain ATCC BAA-1160 / DSM 100696 / MI-1) (Desulfotomaculum reducens), this protein is Small ribosomal subunit protein uS9.